The sequence spans 394 residues: 4-hydroxyphenylpyruvate dioxygenase (394 aa).

VOC domains are found at residues 18 to 149 and 181 to 339; these read SFHH…LLEY and FIDH…IFTK. Fe cation-binding residues include H184, H267, and E350.

Belongs to the 4HPPD family. Homodimer. The cofactor is Fe cation.

It is found in the cytoplasm. The protein resides in the endoplasmic reticulum membrane. Its subcellular location is the golgi apparatus membrane. The enzyme catalyses 3-(4-hydroxyphenyl)pyruvate + O2 = homogentisate + CO2. It participates in amino-acid degradation; L-phenylalanine degradation; acetoacetate and fumarate from L-phenylalanine: step 3/6. Functionally, catalyzes the conversion of 4-hydroxyphenylpyruvic acid to homogentisic acid, one of the steps in tyrosine catabolism. The polypeptide is 4-hydroxyphenylpyruvate dioxygenase (hpd) (Xenopus tropicalis (Western clawed frog)).